Here is a 304-residue protein sequence, read N- to C-terminus: DCN1-like protein 3 (304 aa).

2 disordered regions span residues 1–86 and 284–304; these read MGQC…AEES and EGEG…EEQT. Gly-2 carries the N-myristoyl glycine lipid modification. The 193-residue stretch at 86–278 folds into the DCUN1 domain; the sequence is SSLQRLEELF…LFDTFVEWEM (193 aa).

As to quaternary structure, part of a complex containing DCUN1D3, CUL3 and RBX1. Interacts (via the DCUN1 domain) with the unneddylated cullins: interacts with CUL1, CUL2, CUL3, CUL4A, CUL4B and CUL5; these interactions promote the cullin neddylation and the identity of the cullin dictates the affinity of the interaction. Interacts preferentially with CUL3; this interaction triggers the relocalization of CUL3 to the cell membrane where CUL3 is neddylated. Interacts (via DCUN1 domain) with RBX1. May also interact with regulators or subunits of cullin-RING ligases such as RNF7, ELOB and DDB1; these interactions are bridged by cullins. Interacts (via DCUN1 domain) with CAND1; this interaction is bridged by cullins and strongly inhibits cullin neddylation. These CAND-cullin-DCNL complexes can only be neddylated in the presence of a substrate adapter. Interacts (via DCUN1 domain) with the N-terminally acetylated form of UBE2M and UBE2F.

It is found in the cell membrane. The protein localises to the cytoplasm. Its subcellular location is the nucleus. It localises to the perinuclear region. Its function is as follows. Contributes to the neddylation of all cullins by transferring NEDD8 from N-terminally acetylated NEDD8-conjugating E2s enzyme to different cullin C-terminal domain-RBX complexes and may play a role in the cell cycle progression by regulating the SCF ubiquitin E3 ligase complex, after UV damage. At the cell membrane, can promote and as well inhibit cullins neddylation. This Pongo abelii (Sumatran orangutan) protein is DCN1-like protein 3.